The primary structure comprises 230 residues: Sugar fermentation stimulation protein homolog (230 aa).

Belongs to the SfsA family.

In Clostridium tetani (strain Massachusetts / E88), this protein is Sugar fermentation stimulation protein homolog.